The primary structure comprises 248 residues: Pyridoxine 5'-phosphate synthase (248 aa).

Asparagine 9 is a binding site for 3-amino-2-oxopropyl phosphate. A 1-deoxy-D-xylulose 5-phosphate-binding site is contributed by 11-12 (DH). Arginine 20 lines the 3-amino-2-oxopropyl phosphate pocket. Histidine 45 acts as the Proton acceptor in catalysis. Residues arginine 47 and histidine 52 each coordinate 1-deoxy-D-xylulose 5-phosphate. The active-site Proton acceptor is glutamate 72. Residue threonine 102 participates in 1-deoxy-D-xylulose 5-phosphate binding. Residue histidine 193 is the Proton donor of the active site. 3-amino-2-oxopropyl phosphate-binding positions include glycine 194 and 215–216 (GH).

This sequence belongs to the PNP synthase family. As to quaternary structure, homooctamer; tetramer of dimers.

Its subcellular location is the cytoplasm. It catalyses the reaction 3-amino-2-oxopropyl phosphate + 1-deoxy-D-xylulose 5-phosphate = pyridoxine 5'-phosphate + phosphate + 2 H2O + H(+). Its pathway is cofactor biosynthesis; pyridoxine 5'-phosphate biosynthesis; pyridoxine 5'-phosphate from D-erythrose 4-phosphate: step 5/5. In terms of biological role, catalyzes the complicated ring closure reaction between the two acyclic compounds 1-deoxy-D-xylulose-5-phosphate (DXP) and 3-amino-2-oxopropyl phosphate (1-amino-acetone-3-phosphate or AAP) to form pyridoxine 5'-phosphate (PNP) and inorganic phosphate. This Hydrogenovibrio crunogenus (strain DSM 25203 / XCL-2) (Thiomicrospira crunogena) protein is Pyridoxine 5'-phosphate synthase.